The sequence spans 188 residues: NAD(P)H-quinone oxidoreductase subunit 6, chloroplastic (188 aa).

The next 5 helical transmembrane spans lie at 10-30 (GILL…ILLN), 32-52 (IVQS…LYLV), 61-81 (AQVL…VMLI), 97-117 (GNNI…SIIL), and 153-173 (FLLP…GAIT).

It belongs to the complex I subunit 6 family. NDH is composed of at least 16 different subunits, 5 of which are encoded in the nucleus.

It localises to the plastid. The protein localises to the chloroplast thylakoid membrane. It catalyses the reaction a plastoquinone + NADH + (n+1) H(+)(in) = a plastoquinol + NAD(+) + n H(+)(out). The catalysed reaction is a plastoquinone + NADPH + (n+1) H(+)(in) = a plastoquinol + NADP(+) + n H(+)(out). Its function is as follows. NDH shuttles electrons from NAD(P)H:plastoquinone, via FMN and iron-sulfur (Fe-S) centers, to quinones in the photosynthetic chain and possibly in a chloroplast respiratory chain. The immediate electron acceptor for the enzyme in this species is believed to be plastoquinone. Couples the redox reaction to proton translocation, and thus conserves the redox energy in a proton gradient. This chain is NAD(P)H-quinone oxidoreductase subunit 6, chloroplastic (ndhG), found in Psilotum nudum (Whisk fern).